Here is a 431-residue protein sequence, read N- to C-terminus: Glutamyl-tRNA(Gln) amidotransferase subunit A (431 aa).

Residues K37 and S112 each act as charge relay system in the active site. The active-site Acyl-ester intermediate is the S136.

The protein belongs to the amidase family. GatA subfamily. In terms of assembly, heterotrimer of A, B and C subunits.

The enzyme catalyses L-glutamyl-tRNA(Gln) + L-glutamine + ATP + H2O = L-glutaminyl-tRNA(Gln) + L-glutamate + ADP + phosphate + H(+). Its function is as follows. Allows the formation of correctly charged Gln-tRNA(Gln) through the transamidation of misacylated Glu-tRNA(Gln) in organisms which lack glutaminyl-tRNA synthetase. The reaction takes place in the presence of glutamine and ATP through an activated gamma-phospho-Glu-tRNA(Gln). The sequence is that of Glutamyl-tRNA(Gln) amidotransferase subunit A from Methanospirillum hungatei JF-1 (strain ATCC 27890 / DSM 864 / NBRC 100397 / JF-1).